Here is a 118-residue protein sequence, read N- to C-terminus: Large ribosomal subunit protein bL21c (118 aa).

Belongs to the bacterial ribosomal protein bL21 family. Part of the 50S ribosomal subunit.

The protein resides in the plastid. It is found in the chloroplast. Functionally, this protein binds to 23S rRNA. The sequence is that of Large ribosomal subunit protein bL21c from Anthoceros angustus (Hornwort).